The sequence spans 252 residues: Cell division protein ZapD (252 aa).

It belongs to the ZapD family. In terms of assembly, interacts with FtsZ.

It is found in the cytoplasm. Its function is as follows. Cell division factor that enhances FtsZ-ring assembly. Directly interacts with FtsZ and promotes bundling of FtsZ protofilaments, with a reduction in FtsZ GTPase activity. This is Cell division protein ZapD from Cupriavidus taiwanensis (strain DSM 17343 / BCRC 17206 / CCUG 44338 / CIP 107171 / LMG 19424 / R1) (Ralstonia taiwanensis (strain LMG 19424)).